Here is a 244-residue protein sequence, read N- to C-terminus: MKIYTYHTPERVPADWQPDCAIAVDVLRATTTIATALAAGAEAVQVFSDLTELEQVSQQWPAAKRIRVGERGGKKVAGFDMGNSPAECLPERVRGCRLFMSTTNGTRSLERIQASPLVLAAALVNRAAVAEFVQKHQPETVWIVGSGWEGSYSLEDTVCAGALIHYLWGQQDAPLETLAGNDETIAATALYRYYQDDLLTLFHHSSHGQRLLNLGNEADLKYCAQVDILAIVPWQVSPKLLTKA.

It belongs to the ComB family. Mg(2+) is required as a cofactor.

It catalyses the reaction (2R)-O-phospho-3-sulfolactate + H2O = (2R)-3-sulfolactate + phosphate. In Thermosynechococcus vestitus (strain NIES-2133 / IAM M-273 / BP-1), this protein is Probable 2-phosphosulfolactate phosphatase.